The following is a 519-amino-acid chain: Ribonuclease Y (519 aa).

The chain crosses the membrane as a helical span at residues 6–26 (VPFYLLIFLVGIGLGVLTFWA). The region spanning 209–272 (TVCTVTIPNE…HIAKMALTEL (64 aa)) is the KH domain. Residues 335–428 (VLDHSLEVSH…CSAADAISAS (94 aa)) enclose the HD domain.

This sequence belongs to the RNase Y family.

It is found in the cell membrane. In terms of biological role, endoribonuclease that initiates mRNA decay. The sequence is that of Ribonuclease Y from Protochlamydia amoebophila (strain UWE25).